The sequence spans 107 residues: SOSS complex subunit C (107 aa).

Belongs to the SOSS-C family. As to quaternary structure, belongs to the multiprotein complex Integrator. Component of the SOSS complex, composed of soss-b (soss-b1/nabp2 or soss-b2/nabp1), soss-a/ints3 and soss-c/inip.

Its subcellular location is the nucleus. In terms of biological role, component of the SOSS complex, a multiprotein complex that functions downstream of the MRN complex to promote DNA repair and G2/M checkpoint. The SOSS complex associates with single-stranded DNA at DNA lesions and influences diverse endpoints in the cellular DNA damage response including cell-cycle checkpoint activation, recombinational repair and maintenance of genomic stability. Required for efficient homologous recombination-dependent repair of double-strand breaks (DSBs). This Salmo salar (Atlantic salmon) protein is SOSS complex subunit C (inip).